An 89-amino-acid polypeptide reads, in one-letter code: Co-chaperonin GroES (89 aa).

It belongs to the GroES chaperonin family. As to quaternary structure, heptamer of 7 subunits arranged in a ring. Interacts with the chaperonin GroEL.

The protein localises to the cytoplasm. Its function is as follows. Together with the chaperonin GroEL, plays an essential role in assisting protein folding. The GroEL-GroES system forms a nano-cage that allows encapsulation of the non-native substrate proteins and provides a physical environment optimized to promote and accelerate protein folding. GroES binds to the apical surface of the GroEL ring, thereby capping the opening of the GroEL channel. This Porphyromonas gingivalis (strain ATCC 33277 / DSM 20709 / CIP 103683 / JCM 12257 / NCTC 11834 / 2561) protein is Co-chaperonin GroES.